A 444-amino-acid polypeptide reads, in one-letter code: Ribosomal protein uS12 methylthiotransferase RimO (444 aa).

The region spanning isoleucine 4–glutamate 118 is the MTTase N-terminal domain. Residues cysteine 13, cysteine 48, cysteine 81, cysteine 155, cysteine 159, and cysteine 162 each coordinate [4Fe-4S] cluster. The Radical SAM core domain occupies threonine 141 to asparagine 373. The 67-residue stretch at alanine 374–aspartate 440 folds into the TRAM domain.

This sequence belongs to the methylthiotransferase family. RimO subfamily. [4Fe-4S] cluster is required as a cofactor.

Its subcellular location is the cytoplasm. The enzyme catalyses L-aspartate(89)-[ribosomal protein uS12]-hydrogen + (sulfur carrier)-SH + AH2 + 2 S-adenosyl-L-methionine = 3-methylsulfanyl-L-aspartate(89)-[ribosomal protein uS12]-hydrogen + (sulfur carrier)-H + 5'-deoxyadenosine + L-methionine + A + S-adenosyl-L-homocysteine + 2 H(+). Functionally, catalyzes the methylthiolation of an aspartic acid residue of ribosomal protein uS12. The sequence is that of Ribosomal protein uS12 methylthiotransferase RimO from Clostridium tetani (strain Massachusetts / E88).